The primary structure comprises 428 residues: Serine--tRNA ligase (428 aa).

Residue 231 to 233 (TAE) coordinates L-serine. 262 to 264 (RAE) is an ATP binding site. Glu285 contacts L-serine. An ATP-binding site is contributed by 349–352 (EISS). Ser385 contributes to the L-serine binding site.

This sequence belongs to the class-II aminoacyl-tRNA synthetase family. Type-1 seryl-tRNA synthetase subfamily. Homodimer. The tRNA molecule binds across the dimer.

The protein localises to the cytoplasm. It catalyses the reaction tRNA(Ser) + L-serine + ATP = L-seryl-tRNA(Ser) + AMP + diphosphate + H(+). The catalysed reaction is tRNA(Sec) + L-serine + ATP = L-seryl-tRNA(Sec) + AMP + diphosphate + H(+). The protein operates within aminoacyl-tRNA biosynthesis; selenocysteinyl-tRNA(Sec) biosynthesis; L-seryl-tRNA(Sec) from L-serine and tRNA(Sec): step 1/1. Functionally, catalyzes the attachment of serine to tRNA(Ser). Is also able to aminoacylate tRNA(Sec) with serine, to form the misacylated tRNA L-seryl-tRNA(Sec), which will be further converted into selenocysteinyl-tRNA(Sec). This chain is Serine--tRNA ligase, found in Methylorubrum extorquens (strain CM4 / NCIMB 13688) (Methylobacterium extorquens).